The sequence spans 368 residues: Transcription factor TGA1 (368 aa).

Residues 53–65 (LDNNVSEDTSHGT) are compositionally biased toward polar residues. The disordered stretch occupies residues 53–83 (LDNNVSEDTSHGTAGTPHMFDQEASTSRHPD). The bZIP domain occupies 82 to 145 (PDKIQRRLAQ…NGIDTNSLGF (64 aa)). Coiled-coil stretches lie at residues 83–131 (DKIQ…RQQG) and 261–281 (NLKQ…EKLQ). Positions 84–104 (KIQRRLAQNREAARKSRLRKK) are basic motif. The leucine-zipper stretch occupies residues 110–124 (LETSRLKLIQLEQEL). The region spanning 153-363 (IAAFEMEYGH…RALSSSWATR (211 aa)) is the DOG1 domain. An intrachain disulfide couples cysteine 260 to cysteine 266.

The protein belongs to the bZIP family. Binds DNA as a dimer. The reduced form interacts with NPR1. As to expression, predominantly expressed in roots.

The protein resides in the nucleus. In terms of biological role, transcriptional activator that binds specifically to the DNA sequence 5'-TGACG-3'. Recognizes ocs elements like the as-1 motif of the cauliflower mosaic virus 35S promoter. Binding to the as-1-like cis elements mediate auxin- and salicylic acid-inducible transcription. May be involved in the induction of the systemic acquired resistance (SAR) via its interaction with NPR1. Could also bind to the Hex-motif (5'-TGACGTGG-3') another cis-acting element found in plant histone promoters. This Arabidopsis thaliana (Mouse-ear cress) protein is Transcription factor TGA1 (TGA1).